We begin with the raw amino-acid sequence, 552 residues long: CTP synthase (552 aa).

Residues 1 to 271 (MASAASSKHL…DAFVVRRLGL (271 aa)) are amidoligase domain. Ser-18 contributes to the CTP binding site. Residue Ser-18 participates in UTP binding. ATP contacts are provided by residues 19 to 24 (SLGKGL) and Asp-76. 2 residues coordinate Mg(2+): Asp-76 and Glu-145. Residues 152 to 154 (DIE), 192 to 197 (KTKPTQ), and Lys-228 each bind CTP. UTP is bound by residues 192–197 (KTKPTQ) and Lys-228. The Glutamine amidotransferase type-1 domain occupies 296 to 546 (TIALVGKYVD…IEAALKYSAG (251 aa)). Gly-359 contributes to the L-glutamine binding site. Catalysis depends on Cys-386, which acts as the Nucleophile; for glutamine hydrolysis. L-glutamine is bound by residues 387-390 (LGLQ), Glu-410, and Arg-472. Residues His-519 and Glu-521 contribute to the active site.

Belongs to the CTP synthase family. As to quaternary structure, homotetramer.

The enzyme catalyses UTP + L-glutamine + ATP + H2O = CTP + L-glutamate + ADP + phosphate + 2 H(+). It catalyses the reaction L-glutamine + H2O = L-glutamate + NH4(+). The catalysed reaction is UTP + NH4(+) + ATP = CTP + ADP + phosphate + 2 H(+). The protein operates within pyrimidine metabolism; CTP biosynthesis via de novo pathway; CTP from UDP: step 2/2. Its activity is regulated as follows. Allosterically activated by GTP, when glutamine is the substrate; GTP has no effect on the reaction when ammonia is the substrate. The allosteric effector GTP functions by stabilizing the protein conformation that binds the tetrahedral intermediate(s) formed during glutamine hydrolysis. Inhibited by the product CTP, via allosteric rather than competitive inhibition. Functionally, catalyzes the ATP-dependent amination of UTP to CTP with either L-glutamine or ammonia as the source of nitrogen. Regulates intracellular CTP levels through interactions with the four ribonucleotide triphosphates. The sequence is that of CTP synthase from Thermobifida fusca (strain YX).